The chain runs to 92 residues: Small ribosomal subunit protein uS19c (92 aa).

This sequence belongs to the universal ribosomal protein uS19 family.

The protein resides in the plastid. It is found in the chloroplast. Its function is as follows. Protein S19 forms a complex with S13 that binds strongly to the 16S ribosomal RNA. The chain is Small ribosomal subunit protein uS19c from Panax ginseng (Korean ginseng).